Here is a 243-residue protein sequence, read N- to C-terminus: Hydroxyacylglutathione hydrolase (243 aa).

Zn(2+) is bound by residues His59, His61, Asp63, His64, His117, Asp135, and His173.

It belongs to the metallo-beta-lactamase superfamily. Glyoxalase II family. As to quaternary structure, monomer. It depends on Zn(2+) as a cofactor.

It catalyses the reaction an S-(2-hydroxyacyl)glutathione + H2O = a 2-hydroxy carboxylate + glutathione + H(+). It functions in the pathway secondary metabolite metabolism; methylglyoxal degradation; (R)-lactate from methylglyoxal: step 2/2. Thiolesterase that catalyzes the hydrolysis of S-D-lactoyl-glutathione to form glutathione and D-lactic acid. This is Hydroxyacylglutathione hydrolase from Acidiphilium cryptum (strain JF-5).